Here is a 529-residue protein sequence, read N- to C-terminus: Peptide chain release factor 3 (529 aa).

The 270-residue stretch at 11-280 (AKRRTFAIIS…GLVEWAPAPM (270 aa)) folds into the tr-type G domain. GTP is bound by residues 20–27 (SHPDAGKT), 88–92 (DTPGH), and 142–145 (NKLD).

The protein belongs to the TRAFAC class translation factor GTPase superfamily. Classic translation factor GTPase family. PrfC subfamily.

It localises to the cytoplasm. Increases the formation of ribosomal termination complexes and stimulates activities of RF-1 and RF-2. It binds guanine nucleotides and has strong preference for UGA stop codons. It may interact directly with the ribosome. The stimulation of RF-1 and RF-2 is significantly reduced by GTP and GDP, but not by GMP. The protein is Peptide chain release factor 3 of Shigella boydii serotype 18 (strain CDC 3083-94 / BS512).